The primary structure comprises 355 residues: Poly(3-hydroxyalkanoate) polymerase subunit PhaC (355 aa).

The region spanning P69 to I334 is the AB hydrolase-1 domain. The active site involves C149.

It belongs to the PHA/PHB synthase family. Type III PhaC subfamily. In terms of assembly, a large complex of PhaC and PhaE; the ratio of the subunits has been estimated to be from 1:1 to 4:1, with more PhaE than PhaC.

Its subcellular location is the cytoplasm. It catalyses the reaction (3R)-3-hydroxybutanoyl-CoA + [(3R)-hydroxybutanoate](n) = [(3R)-hydroxybutanoate](n+1) + CoA. It participates in biopolymer metabolism; poly-(R)-3-hydroxybutanoate biosynthesis. In terms of biological role, polymerizes D(-)-3-hydroxybutyryl-CoA to create polyhydroxybutyrate (PHB) which consists of thousands of hydroxybutyrate molecules linked end to end. This subunit has catalytic activity that is enhanced 100-fold by PhaE, the non-catalytic subunit. The sequence is that of Poly(3-hydroxyalkanoate) polymerase subunit PhaC from Allochromatium vinosum (strain ATCC 17899 / DSM 180 / NBRC 103801 / NCIMB 10441 / D) (Chromatium vinosum).